The following is a 172-amino-acid chain: Envelope protein UL45 (172 aa).

Residues 1–27 (MPLRASEHAYRPLGPGTPPMRARLPAA) are Intravirion-facing. A helical; Signal-anchor for type II membrane protein transmembrane segment spans residues 28 to 48 (AWVGVGTIIGGVVIIAALVLV). At 49 to 172 (PSRASWALSP…TSTRNALGLP (124 aa)) the chain is on the virion surface side.

It belongs to the herpesviridae HHV-1 UL45 family.

It localises to the virion membrane. Functionally, important virulence factor of HSV neurotropism. Seems to be required for glycoprotein B-induced fusion. Dispensable for growth in vitro. The chain is Envelope protein UL45 from Human herpesvirus 1 (strain KOS) (HHV-1).